The chain runs to 136 residues: MKFIIFCAIVMAVSVSGFIVDVDTEDKWRNAFDHMLMEEFEEKMDQIEHGLLMLSEQYKELEKTKSKELKEQILRELTIAENYLRGALKFMQQEAKRTDLNMFERYNFETAVSTIEILVKDLAELAKKVKAVKSDD.

An N-terminal signal peptide occupies residues 1–17 (MKFIIFCAIVMAVSVSG).

This sequence belongs to the mite group 5 allergen family. Monomer. Homodimer. As to expression, highly expressed in foregut (stomach), midgut and hindgut. Not expressed in body wall, reproductive system or body cavity.

The protein is Mite allergen Der f 21.0101 of Dermatophagoides farinae (American house dust mite).